The following is a 783-amino-acid chain: Protein SEY1 (783 aa).

At Met-1–His-677 the chain is on the cytoplasmic side. Positions Gly-33–Lys-265 constitute a GB1/RHD3-type G domain. Gly-43 to Ser-50 provides a ligand contact to GTP. Positions His-449–Thr-472 form a coiled coil. The chain crosses the membrane as a helical span at residues Ile-678–Ile-698. The Lumenal portion of the chain corresponds to Arg-699–Pro-701. The helical transmembrane segment at Leu-702–Leu-722 threads the bilayer. The Cytoplasmic portion of the chain corresponds to Trp-723–Asp-783.

This sequence belongs to the TRAFAC class dynamin-like GTPase superfamily. GB1/RHD3 GTPase family. RHD3 subfamily.

Its subcellular location is the endoplasmic reticulum membrane. Cooperates with the reticulon proteins and tubule-shaping DP1 family proteins to generate and maintain the structure of the tubular endoplasmic reticulum network. Has GTPase activity, which is required for its function in ER organization. The sequence is that of Protein SEY1 from Candida glabrata (strain ATCC 2001 / BCRC 20586 / JCM 3761 / NBRC 0622 / NRRL Y-65 / CBS 138) (Yeast).